A 464-amino-acid chain; its full sequence is ATP synthase subunit beta 1 (464 aa).

153-160 (GGAGVGKT) is an ATP binding site.

The protein belongs to the ATPase alpha/beta chains family. In terms of assembly, F-type ATPases have 2 components, CF(1) - the catalytic core - and CF(0) - the membrane proton channel. CF(1) has five subunits: alpha(3), beta(3), gamma(1), delta(1), epsilon(1). CF(0) has three main subunits: a(1), b(2) and c(9-12). The alpha and beta chains form an alternating ring which encloses part of the gamma chain. CF(1) is attached to CF(0) by a central stalk formed by the gamma and epsilon chains, while a peripheral stalk is formed by the delta and b chains.

The protein localises to the cell inner membrane. The enzyme catalyses ATP + H2O + 4 H(+)(in) = ADP + phosphate + 5 H(+)(out). Produces ATP from ADP in the presence of a proton gradient across the membrane. The catalytic sites are hosted primarily by the beta subunits. The protein is ATP synthase subunit beta 1 of Burkholderia mallei (strain SAVP1).